Here is a 535-residue protein sequence, read N- to C-terminus: Heparanase (535 aa).

Positions 1–27 (MLRLLLLWLWGPLGALAQGAPAGTAPT) are cleaved as a signal peptide. Residues 54 to 56 (DAS) and T89 each bind heparan sulfate group. A propeptide spans 102–149 (PTSEERSYWKSQVNHDICRSEPVSAAVLRKLQVEWPFQELLLLREQYQ) (linker peptide). C119 and C171 are oxidised to a cystine. 150–154 (KEFKN) provides a ligand contact to heparan sulfate group. Residues N192 and N209 are each glycosylated (N-linked (GlcNAc...) asparagine). The active-site Proton donor is E217. Residues 262 to 272 (QPRGKTVKLLR), H288, and R295 each bind heparan sulfate group. The interval 280–409 (EVIDSLTWHH…LLFKKLVGPR (130 aa)) is required for heterodimerization with the heparanase 8 kDa subunit. The active-site Nucleophile is the E335. Residues 340–342 (YGG) and 381–383 (GNY) contribute to the heparan sulfate group site. Residues C429 and C534 are joined by a disulfide bond. An N-linked (GlcNAc...) asparagine glycan is attached at N451. Positions 519–535 (FSYGFFVIRNAKIAACI) are required for transferring proheparanase to the Golgi apparatus, secretion and subsequent enzyme activity and for enhancement of PKB/AKT1 phosphorylation.

This sequence belongs to the glycosyl hydrolase 79 family. Heterodimer; heterodimer formation between the 8 kDa and the 50 kDa subunits is required for enzyme activity. Interacts with TF; the interaction, inhibited by heparin, enhances the generation of activated factor X and activates coagulation. Interacts with HRG; the interaction is enhanced at acidic pH, partially inhibits binding of HPSE to cell surface receptors and modulates its enzymatic activity. Interacts with SDC1; the interaction enhances the shedding of SDC1. Interacts with HPSE2. Post-translationally, proteolytically processed. The cleavage of the 65 kDa form leads to the generation of a linker peptide, and the 8 kDa and 50 kDa products. The active form, the 8/50 kDa heterodimer, is resistant to degradation. Complete removal of the linker peptide appears to be a prerequisite to the complete activation of the enzyme. In terms of processing, N-glycosylated. Glycosylation of the 50 kDa subunit appears to be essential for its solubility. Expressed in skin, mainly in the stratum granulosum and the first layer of the stratum corneum in the upper part of the epidermis. Also detected in hair follicles and in sebaceous glands.

It is found in the lysosome membrane. Its subcellular location is the secreted. The protein localises to the nucleus. It catalyses the reaction endohydrolysis of (1-&gt;4)-beta-D-glycosidic bonds of heparan sulfate chains in heparan sulfate proteoglycan.. Its activity is regulated as follows. Inhibited by EDTA and activated by calcium and magnesium. Inhibited by laminarin sulfate and, to a lower extent, by heparin and sulfamin. In terms of biological role, endoglycosidase that cleaves heparan sulfate proteoglycans (HSPGs) into heparan sulfate side chains and core proteoglycans. Participates in extracellular matrix (ECM) degradation and remodeling. Selectively cleaves the linkage between a glucuronic acid unit and an N-sulfo glucosamine unit carrying either a 3-O-sulfo or a 6-O-sulfo group. Can also cleave the linkage between a glucuronic acid unit and an N-sulfo glucosamine unit carrying a 2-O-sulfo group, but not linkages between a glucuronic acid unit and a 2-O-sulfated iduronic acid moiety. It is essentially inactive at neutral pH but becomes active under acidic conditions such as during tumor invasion and in inflammatory processes. Facilitates cell migration associated with metastasis, wound healing and inflammation. Enhances shedding of syndecans, and increases endothelial invasion and angiogenesis in myelomas. Acts as a procoagulant by increasing the generation of activation factor X in the presence of tissue factor and activation factor VII. Increases cell adhesion to the extracellular matrix (ECM), independent of its enzymatic activity. Induces AKT1/PKB phosphorylation via lipid rafts increasing cell mobility and invasion. Heparin increases this AKT1/PKB activation. Regulates osteogenesis. Enhances angiogenesis through up-regulation of SRC-mediated activation of VEGF. Implicated in hair follicle inner root sheath differentiation and hair homeostasis. The polypeptide is Heparanase (Hpse) (Mus musculus (Mouse)).